The chain runs to 212 residues: Abscisic acid receptor PYL10 (212 aa).

The interval 34–191 is START-like; that stretch reads YAVGPGQCSS…NLQKLKSVSE (158 aa). Abscisate is bound by residues K70, 107–112, 134–140, and E156; these read ASTSTE and RLRNYRS. Residues 103–107 carry the Gate loop motif; the sequence is SGLPA. The Latch loop motif lies at 133–135; it reads HRL.

Belongs to the PYR/PYL/RCAR abscisic acid intracellular receptor family. As to quaternary structure, homodimer. Interacts with PP2C53. Binding to PP2C53 is dependent on the presence of abscisic acid (ABA). Interacts with PP2C50. Binding to PP2C50 is dependent on the presence of ABA.

The protein localises to the cytoplasm. Its subcellular location is the cytosol. It localises to the nucleus. In terms of biological role, inhibits the protein phosphatases PP2C06 and PP2C09 when activated by abscisic acid (ABA). Together with PP2C53, SAPK8 and SAPK10, may form an ABA signaling module involved in stress response. The polypeptide is Abscisic acid receptor PYL10 (Oryza sativa subsp. japonica (Rice)).